Reading from the N-terminus, the 333-residue chain is Heat shock transcription factor, X-linked member 4 (333 aa).

A disordered region spans residues 1–66 (MASQNTEQEY…QDNSPPEDRN (66 aa)). Over residues 29 to 39 (GSSPDPNPDSS) the composition is skewed to low complexity. Residues 49–60 (AMSQDPGSQDNS) are compositionally biased toward polar residues. The DNA-binding element occupies 79–182 (FRLSFPRKLW…PRLLENIQRK (104 aa)). Residues 227–275 (QGAPSVQGPSGTQSFRRSGMWSKKSATRHPLGNGPPQEPNGPSWEGTSG) are disordered. Positions 228-242 (GAPSVQGPSGTQSFR) are enriched in polar residues.

The protein belongs to the HSF family.

It localises to the nucleus. This Homo sapiens (Human) protein is Heat shock transcription factor, X-linked member 4.